The chain runs to 399 residues: Phosphoglycerate kinase (399 aa).

Substrate-binding positions include 22–24, R37, 60–63, R118, and R151; these read DFN and HFGR. Residues K201, E322, and 352-355 each bind ATP; that span reads GGDS.

The protein belongs to the phosphoglycerate kinase family. As to quaternary structure, monomer.

It is found in the cytoplasm. The catalysed reaction is (2R)-3-phosphoglycerate + ATP = (2R)-3-phospho-glyceroyl phosphate + ADP. It participates in carbohydrate degradation; glycolysis; pyruvate from D-glyceraldehyde 3-phosphate: step 2/5. The sequence is that of Phosphoglycerate kinase from Wolbachia sp. subsp. Brugia malayi (strain TRS).